Here is a 210-residue protein sequence, read N- to C-terminus: Protein GET1 (210 aa).

The Lumenal segment spans residues 1-4 (MPSL). The helical transmembrane segment at 5-24 (LIIVLIIHVVTYLINTIGAN) threads the bilayer. The Cytoplasmic segment spans residues 25 to 110 (TIDSLLWLLY…SFDLAVKSIR (86 aa)). The stretch at 39–95 (NQTSQTANEQRRLKREVMQLKREMNATSSQDEFAKWAKLRRRHDKTMEEYEAKNKAL) forms a coiled coil. A helical membrane pass occupies residues 111–131 (FFSTTGLKLFLQFWCSKTPIF). Topologically, residues 132-155 (ELPRGWIPWQVEWVLSFPRAPLGT) are lumenal. The helical transmembrane segment at 156-172 (VSIQIWGGVCATVVSLA) threads the bilayer. The Cytoplasmic segment spans residues 173-210 (GDAIGVVNVYLTSKAPKQKEPATSGENSARPMAIKKEL). The disordered stretch occupies residues 189 to 210 (KQKEPATSGENSARPMAIKKEL).

The protein belongs to the WRB/GET1 family. In terms of assembly, interacts with GET3.

It is found in the endoplasmic reticulum membrane. Functionally, required for the post-translational delivery of tail-anchored (TA) proteins to the endoplasmic reticulum. Acts as a membrane receptor for soluble GET3, which recognizes and selectively binds the transmembrane domain of TA proteins in the cytosol. The polypeptide is Protein GET1 (Coccidioides immitis (strain RS) (Valley fever fungus)).